The following is a 402-amino-acid chain: Candidapepsin-1 (402 aa).

A signal peptide (or 18, or 21) is located at residues 1-25 (MVAIVTLTRQVLLTIALALFAQGAA). Residues 26–62 (IPEEAAKRDDNPGFVALDFDVLRKPLNLTEALLREKR) constitute a propeptide, activation peptide. Asparagine 52 carries N-linked (GlcNAc...) asparagine glycosylation. Residues 76 to 389 (YASKVSVGSN…NLDANTISIA (314 aa)) form the Peptidase A1 domain. Aspartate 94 is a catalytic residue. Cysteine 109 and cysteine 115 are oxidised to a cystine. Aspartate 282 is an active-site residue. An intrachain disulfide couples cysteine 320 to cysteine 354.

Belongs to the peptidase A1 family. In terms of processing, O-glycosylated.

Its subcellular location is the secreted. It catalyses the reaction Preferential cleavage at the carboxyl of hydrophobic amino acids, but fails to cleave 15-Leu-|-Tyr-16, 16-Tyr-|-Leu-17 and 24-Phe-|-Phe-25 of insulin B chain. Activates trypsinogen, and degrades keratin.. This is Candidapepsin-1 (SAPP1) from Candida parapsilosis (Yeast).